A 130-amino-acid chain; its full sequence is Albumin-1 D (130 aa).

Residues 1-26 (MASVKLASLIVLFATLGMFLTKNVGA) form the signal peptide. Cystine bridges form between Cys29/Cys46, Cys33/Cys48, and Cys41/Cys58. Propeptides lie at residues 64–69 (VFLKAN) and 123–130 (LLKSVSTA).

The C-terminal glycine may be removed from PA1b. In terms of tissue distribution, major component of both the cotyledons and embryonic axes of mature seeds.

Functionally, PA1b binds to basic 7S globulin (BG) and stimulates its phosphorylation activity. Involved in the signal transduction system to regulate the growth and differentiation as a hormone peptide. Toxic to various insects through binding to a high affinity binding site in the insect gut. The protein is Albumin-1 D of Pisum sativum (Garden pea).